Reading from the N-terminus, the 714-residue chain is DNA ligase (714 aa).

NAD(+)-binding positions include Asp47–Asp51, Ser96–Leu97, and Glu130. Lys132 serves as the catalytic N6-AMP-lysine intermediate. NAD(+)-binding residues include Arg153, Glu190, Lys306, and Lys330. Cys435, Cys438, Cys453, and Cys459 together coordinate Zn(2+). Residues Arg636–Gly714 form the BRCT domain.

It belongs to the NAD-dependent DNA ligase family. LigA subfamily. Mg(2+) is required as a cofactor. The cofactor is Mn(2+).

The catalysed reaction is NAD(+) + (deoxyribonucleotide)n-3'-hydroxyl + 5'-phospho-(deoxyribonucleotide)m = (deoxyribonucleotide)n+m + AMP + beta-nicotinamide D-nucleotide.. Functionally, DNA ligase that catalyzes the formation of phosphodiester linkages between 5'-phosphoryl and 3'-hydroxyl groups in double-stranded DNA using NAD as a coenzyme and as the energy source for the reaction. It is essential for DNA replication and repair of damaged DNA. This Nitrobacter hamburgensis (strain DSM 10229 / NCIMB 13809 / X14) protein is DNA ligase.